Reading from the N-terminus, the 334-residue chain is MTPIDAKRPLQLNDQGQLRHFLSLDGLPRELLTEILDTADSFLEVGARAVKKVPLLRGKTVCNVFFENSTRTRTTFELAAQRLSADVISLNVSTSSTSKGETLFDTLRNLEAMAADMFVVRHSDSGAAHFIAEHVCPDVAVINGGDGRHAHPTQGMLDMLTIRRHKGSFENLSVAIVGDILHSRVARSDMLALKALGCPDIRVIGPKTLIPIGIEQYGVKVYTDLAEGLKDVDVVIMLRLQRERMAGGLLPSEGEFYRLFGLTTARLACAKPDAIVMHPGPINRGVEIESAVADGKHSVILNQVTYGIAVRMAVLSMAMSGQNAQRQFDQENAQ.

The carbamoyl phosphate site is built by Arg71 and Thr72. Lys99 contacts L-aspartate. Residues Arg121, His151, and Gln154 each coordinate carbamoyl phosphate. Arg184 and Arg239 together coordinate L-aspartate. Carbamoyl phosphate is bound by residues Gly280 and Pro281.

It belongs to the aspartate/ornithine carbamoyltransferase superfamily. ATCase family. As to quaternary structure, heterododecamer (2C3:3R2) of six catalytic PyrB chains organized as two trimers (C3), and six regulatory PyrI chains organized as three dimers (R2).

The catalysed reaction is carbamoyl phosphate + L-aspartate = N-carbamoyl-L-aspartate + phosphate + H(+). It functions in the pathway pyrimidine metabolism; UMP biosynthesis via de novo pathway; (S)-dihydroorotate from bicarbonate: step 2/3. In terms of biological role, catalyzes the condensation of carbamoyl phosphate and aspartate to form carbamoyl aspartate and inorganic phosphate, the committed step in the de novo pyrimidine nucleotide biosynthesis pathway. This chain is Aspartate carbamoyltransferase catalytic subunit, found in Pseudomonas putida (Arthrobacter siderocapsulatus).